We begin with the raw amino-acid sequence, 267 residues long: MNALLSNPFKEGLRKGDTQIGLWLSSTTSYMAEIAATSGYDWLLIDGEHAPNTVQDLYHQLQAIAPYASQPVIRPIEGSKALIKQVLDIGAQTLLIPMVDTAEQARQVVSATRYPPLGQRGVGASVARAARWGRIDNYMAQANESLCLLVQVESKVALENLDAILEVEGIDGVFIGPADLSASLGYPDNAGHPEVQRIIEACIYRIRAAGKAAGFLAVDPTMAQKCLAWGANFVAVGVDTMLYTEALDSRLAMFKSVQSVSTAKRSY.

Histidine 49 functions as the Proton acceptor in the catalytic mechanism. Residue glutamine 151 coordinates substrate. Residue glutamate 153 participates in Mg(2+) binding. Substrate is bound by residues alanine 178 and aspartate 179. Position 179 (aspartate 179) interacts with Mg(2+).

It belongs to the HpcH/HpaI aldolase family. KDR aldolase subfamily. In terms of assembly, homohexamer. It depends on Mg(2+) as a cofactor.

The catalysed reaction is 2-dehydro-3-deoxy-L-rhamnonate = (S)-lactaldehyde + pyruvate. Catalyzes the reversible retro-aldol cleavage of 2-keto-3-deoxy-L-rhamnonate (KDR) to pyruvate and lactaldehyde. The sequence is that of 2-keto-3-deoxy-L-rhamnonate aldolase from Salmonella dublin (strain CT_02021853).